A 138-amino-acid chain; its full sequence is MAKEYSRTQRIGDQMQRELAQLIRREIKDPRVGLVTITAVDVSRDVGHAKIFMTVMGQDSAEEIAQTIKVLNSAAGFLRMQLAREMKLRSVPQLHFHYDESVVRGAHLSALIERAVAEDGQHQEGPASADAKPESTEE.

The tract at residues 117–138 (AEDGQHQEGPASADAKPESTEE) is disordered.

Belongs to the RbfA family. As to quaternary structure, monomer. Binds 30S ribosomal subunits, but not 50S ribosomal subunits or 70S ribosomes.

It is found in the cytoplasm. Functionally, one of several proteins that assist in the late maturation steps of the functional core of the 30S ribosomal subunit. Associates with free 30S ribosomal subunits (but not with 30S subunits that are part of 70S ribosomes or polysomes). Required for efficient processing of 16S rRNA. May interact with the 5'-terminal helix region of 16S rRNA. This Pseudomonas syringae pv. syringae (strain B728a) protein is Ribosome-binding factor A.